The sequence spans 1004 residues: Cadmium/zinc-transporting ATPase HMA3 (1004 aa).

An HMA domain is found at 42–108 (KKTYLDVLGV…ALNKAGLEAS (67 aa)). The next 8 membrane-spanning stretches (helical) occupy residues 120–140 (RWPS…FFEW), 144–164 (PLQC…VRRG), 171–191 (LSLD…CLGD), 193–213 (TEAG…TLAC), 340–360 (CAKY…LIPA), 371–391 (WKLA…LSTP), 683–703 (IAVN…LAAA), and 707–727 (VLWA…LNSM). Residues 931–952 (TGCGASKRSPPAEGSCSGGEGG) are disordered.

Belongs to the cation transport ATPase (P-type) (TC 3.A.3) family. Type IB subfamily. Specifically expressed in roots.

It localises to the vacuole membrane. The catalysed reaction is Zn(2+)(in) + ATP + H2O = Zn(2+)(out) + ADP + phosphate + H(+). It carries out the reaction Cd(2+)(in) + ATP + H2O = Cd(2+)(out) + ADP + phosphate + H(+). In terms of biological role, root-specific cadmium (Cd) transporter that mediates Cd efflux in root vacuoles. Involved in Cd detoxification by sequestrating Cd into root vacuoles and limiting translocation of Cd from the roots to the shoots, and accumulation in grains. This Oryza sativa subsp. japonica (Rice) protein is Cadmium/zinc-transporting ATPase HMA3.